Reading from the N-terminus, the 463-residue chain is uncharacterized protein (463 aa).

The next 6 membrane-spanning stretches (helical) occupy residues 3–23, 88–108, 112–132, 216–236, 245–265, and 276–296; these read IPPE…SLLV, VAAA…AELA, AIHG…PIAL, FSPA…DFLW, LLLL…SALI, and LPIA…AVAV. The tract at residues 303–322 is disordered; that stretch reads VPGGSPPTSNPAPAAPSSNS. Pro residues predominate over residues 306–316; it reads GSPPTSNPAPA. Helical transmembrane passes span 323-343 and 419-439; these read VGSA…APPG and AGTL…AGMV.

Belongs to the mycobacterial PPE family.

Its subcellular location is the cell membrane. This is an uncharacterized protein from Mycobacterium tuberculosis (strain CDC 1551 / Oshkosh).